We begin with the raw amino-acid sequence, 296 residues long: Probable endonuclease 4 (296 aa).

His68, His109, Glu144, Asp178, His181, His213, Asp226, His228, and Glu258 together coordinate Zn(2+).

This sequence belongs to the AP endonuclease 2 family. Zn(2+) is required as a cofactor.

The enzyme catalyses Endonucleolytic cleavage to 5'-phosphooligonucleotide end-products.. Endonuclease IV plays a role in DNA repair. It cleaves phosphodiester bonds at apurinic or apyrimidinic (AP) sites, generating a 3'-hydroxyl group and a 5'-terminal sugar phosphate. In Staphylococcus aureus (strain NCTC 8325 / PS 47), this protein is Probable endonuclease 4.